We begin with the raw amino-acid sequence, 704 residues long: Elongation factor G (704 aa).

Residues 8–291 enclose the tr-type G domain; it reads DKVRNIGIMA…AVVEYLASPV (284 aa). Residues 17–24, 90–94, and 144–147 contribute to the GTP site; these read AHIDAGKT, DTPGH, and NKMD.

It belongs to the TRAFAC class translation factor GTPase superfamily. Classic translation factor GTPase family. EF-G/EF-2 subfamily.

Its subcellular location is the cytoplasm. In terms of biological role, catalyzes the GTP-dependent ribosomal translocation step during translation elongation. During this step, the ribosome changes from the pre-translocational (PRE) to the post-translocational (POST) state as the newly formed A-site-bound peptidyl-tRNA and P-site-bound deacylated tRNA move to the P and E sites, respectively. Catalyzes the coordinated movement of the two tRNA molecules, the mRNA and conformational changes in the ribosome. In Chlorobium phaeobacteroides (strain DSM 266 / SMG 266 / 2430), this protein is Elongation factor G.